The chain runs to 226 residues: Chalcone--flavanone isomerase 1 (226 aa).

Positions 52, 117, and 194 each coordinate substrate.

The protein belongs to the chalcone isomerase family.

The enzyme catalyses a chalcone = a flavanone.. It participates in secondary metabolite biosynthesis; flavonoid biosynthesis. In terms of biological role, catalyzes the intramolecular cyclization of bicyclic chalcones into tricyclic (S)-flavanones. Responsible for the isomerization of 4,2',4',6'-tetrahydroxychalcone (also termed chalcone) into naringenin. The sequence is that of Chalcone--flavanone isomerase 1 (CHI1) from Lotus japonicus (Lotus corniculatus var. japonicus).